A 500-amino-acid polypeptide reads, in one-letter code: Autophagy-related protein 18 (500 aa).

One copy of the WD 1 repeat lies at 3 to 41 (DSSPTINFINFNQTGTCISLGTSKGFKIFNCEPFGKFYS). The tract at residues 174–197 (VGGNTETSFKRDQQDAGHSDISDL) is disordered. The segment covering 181–194 (SFKRDQQDAGHSDI) has biased composition (basic and acidic residues). 2 WD repeats span residues 243 to 283 (AHKG…KIYQ) and 288 to 327 (TYAT…SNNK). The short motif at 284–288 (FRRGT) is the L/FRRG motif element. The disordered stretch occupies residues 328-358 (LDSDDSNMEEAAADDSSLDTTSIDALSDEEN). Residues 331-344 (DDSNMEEAAADDSS) are compositionally biased toward acidic residues. A Phosphoserine modification is found at Ser-354.

This sequence belongs to the WD repeat PROPPIN family. Component of the PI(3,5)P2 regulatory complex, composed of ATG18, FIG4, FAB1, VAC14 and VAC7. VAC14 nucleates the assembly of the complex and serves as a scaffold. Interacts with ATG2, ATG9 and VAC17. The ATG2-ATG18 complex is essential for autophagosome formation.

The protein resides in the preautophagosomal structure membrane. It is found in the vacuole membrane. The protein localises to the endosome membrane. In terms of biological role, the PI(3,5)P2 regulatory complex regulates both the synthesis and turnover of phosphatidylinositol 3,5-bisphosphate (PtdIns(3,5)P2). May negatively regulate FAB1 activity by sequestering or masking VAC7 from FAB1. Necessary for proper vacuole morphology. Plays an important role in osmotically-induced vacuole fragmentation. Required for cytoplasm to vacuole transport (Cvt) vesicle formation, pexophagy and starvation-induced autophagy. Involved in correct ATG9 trafficking to the pre-autophagosomal structure. Might also be involved in premeiotic DNA replication. With ATG2, protects ATG8 from ARG4-mediated cleavage. The polypeptide is Autophagy-related protein 18 (ATG18) (Saccharomyces cerevisiae (strain YJM789) (Baker's yeast)).